The following is a 201-amino-acid chain: MRRAWILLTLGLVACVSAESRAELTSDKDMYLDNSSIEEASGVYPIDDDDYASASGSGADEDVESPELTTSRPLPKILLTSAAPKVETTTLNIQNKIPAQTKSPEETDKEKVHLSDSERKMDPAEEDTNVYTEKHSDSLFKRTEVLAAVIAGGVIGFLFAIFLILLLVYRMRKKDEGSYDLGERKPSSAAYQKAPTKEFYA.

An N-terminal signal peptide occupies residues 1-18; that stretch reads MRRAWILLTLGLVACVSA. The Extracellular segment spans residues 19 to 144; it reads ESRAELTSDK…HSDSLFKRTE (126 aa). O-linked (Xyl...) (glycosaminoglycan) serine glycans are attached at residues Ser41, Ser55, and Ser57. 2 disordered regions span residues 42 to 70 and 90 to 130; these read GVYP…ELTT and TLNI…DTNV. Positions 90-102 are enriched in polar residues; the sequence is TLNIQNKIPAQTK. O-linked (GalNAc...) threonine glycosylation occurs at Thr101. Positions 103–123 are enriched in basic and acidic residues; sequence SPEETDKEKVHLSDSERKMDP. Ser115 is subject to Phosphoserine; by FAM20C. A helical transmembrane segment spans residues 145 to 169; the sequence is VLAAVIAGGVIGFLFAIFLILLLVY. Over 170–201 the chain is Cytoplasmic; it reads RMRKKDEGSYDLGERKPSSAAYQKAPTKEFYA. The interval 178-201 is disordered; sequence SYDLGERKPSSAAYQKAPTKEFYA. Ser187 is subject to Phosphoserine.

The protein belongs to the syndecan proteoglycan family. As to quaternary structure, interacts (via cytoplasmic domain) with SARM1. Forms a complex with SDCBP and PDCD6IP. Post-translationally, O-glycosylated with core 1 or possibly core 8 glycans. Contains heparan sulfate. Also contains chondroitin sulfate.

It is found in the membrane. Functionally, cell surface proteoglycan which regulates dendritic arbor morphogenesis. In Homo sapiens (Human), this protein is Syndecan-2 (SDC2).